The chain runs to 159 residues: 2-C-methyl-D-erythritol 2,4-cyclodiphosphate synthase (159 aa).

Positions 8 and 10 each coordinate a divalent metal cation. Residues 8–10 and 34–35 each bind 4-CDP-2-C-methyl-D-erythritol 2-phosphate; these read DVH and HS. A divalent metal cation is bound at residue H42. 4-CDP-2-C-methyl-D-erythritol 2-phosphate is bound by residues 56-58, 100-106, 132-135, F139, and R142; these read DIG, AQAPKMA, and TTTE.

Belongs to the IspF family. In terms of assembly, homotrimer. A divalent metal cation serves as cofactor.

It catalyses the reaction 4-CDP-2-C-methyl-D-erythritol 2-phosphate = 2-C-methyl-D-erythritol 2,4-cyclic diphosphate + CMP. The protein operates within isoprenoid biosynthesis; isopentenyl diphosphate biosynthesis via DXP pathway; isopentenyl diphosphate from 1-deoxy-D-xylulose 5-phosphate: step 4/6. Functionally, involved in the biosynthesis of isopentenyl diphosphate (IPP) and dimethylallyl diphosphate (DMAPP), two major building blocks of isoprenoid compounds. Catalyzes the conversion of 4-diphosphocytidyl-2-C-methyl-D-erythritol 2-phosphate (CDP-ME2P) to 2-C-methyl-D-erythritol 2,4-cyclodiphosphate (ME-CPP) with a corresponding release of cytidine 5-monophosphate (CMP). This is 2-C-methyl-D-erythritol 2,4-cyclodiphosphate synthase from Marinobacter nauticus (strain ATCC 700491 / DSM 11845 / VT8) (Marinobacter aquaeolei).